The chain runs to 157 residues: Protein snakeskin (157 aa).

Residues 2–6 are Cytoplasmic-facing; sequence VSVQT. Residues 7–27 form a helical membrane-spanning segment; sequence IATIVVKTFKIVLNIIILVLY. The Extracellular portion of the chain corresponds to 28–53; that stretch reads RTGYNGEFLGVGGTWNLNEEKNPDAE. Residues 54-74 form a helical membrane-spanning segment; the sequence is IVASGVIVGYLIYTLVQIVTF. At 75 to 87 the chain is on the cytoplasmic side; that stretch reads LFGTTEHKRALSE. A helical membrane pass occupies residues 88-108; it reads IVMNFVGVFLWIAVGAVALHY. Over 109–130 the chain is Extracellular; sequence WGGYQGEHQFQFVFAEKQVGLA. Residues 131–151 form a helical membrane-spanning segment; that stretch reads VGALCVINGAIYLLDTALSVI. The Cytoplasmic segment spans residues 152–157; sequence HFTKEM.

Expressed in midgut epithelium (at protein level).

It localises to the apicolateral cell membrane. The protein resides in the cell junction. Its subcellular location is the septate junction. Its function is as follows. Required for assembly of smooth septate junctions (sSJs). May be important for barrier function of the midgut epithelium. The polypeptide is Protein snakeskin (Bombyx mori (Silk moth)).